The sequence spans 65 residues: Large ribosomal subunit protein bL35 (65 aa).

A disordered region spans residues 23–44; the sequence is KRMKAGKQHILTKKSQKTKRNL.

The protein belongs to the bacterial ribosomal protein bL35 family.

The protein is Large ribosomal subunit protein bL35 of Lachnoclostridium phytofermentans (strain ATCC 700394 / DSM 18823 / ISDg) (Clostridium phytofermentans).